Here is a 793-residue protein sequence, read N- to C-terminus: MSSHRDGAGADRITIKIHNMKRSASRSPGPASRSSLSRNSRSMGRGYDNGSGVPGDSPERLSPERMRRRLDRSPSRYGSPHREPYMRGPPPAERPAGYKVLCVSALPPKAPDDFIEETLYREYKKFGDFSVRLAHDLDERVAYVCFRTPEDAREAKHHKPRLIIYDKMAIVEPVYKSTTRPEYRPRGHSMSPPDYERYHYSRSPMGQGVPLDHRRPPIDPYDRYGPPHMHPHAVHPRDYRPLHHDYPHPPRGPPLHRGGHPHHLHGHAPPHQYAPMRPLAPRPHAPYEKPESKKDKFPNYLHHVQPEDDPLSTRTLFAGNLEVTIADDELRRIFGKYGVVDDIDIKRPPPGTGNAFAFVRYQNLDMAHRAKIELSGQYIGKFQCKIGYGKVTPATRMWIGGLGAWTSVTQLEREFDRFGAIKKIEYQKGEPYAYIQYETVEAATAAVKEMRGFPLGGPERRLRTDFAELPGATPAAPFKSSKPPYDESALEYRRPEYDPYYEESAAYAPRGGYSPYPPRGGYRGRGGYRGRGRGMYHYHNDVHRPPHPGSLAGSSSSVPPPGGVEDEWRRPPGESYDRGARSSSREPGVERSRSRSPLKRARSPGSDSDTSTRRNDALASASTVPDVARKCSTVWTGALILKSSLFPAKFHLTDGDTDIVESLMRDEEGKHNLRITQRLRLDPPKLDDVQKRIASSSSHAIFMGLAGSTNDTNCDDASVQTRPLRNLVSYLKQKEAAGVISLLNKETEATGVLYAFPPCDFSTELLKRTCHSLTEEGLKEDHLVIVVVRGGTA.

Disordered regions lie at residues 1–93 and 243–296; these read MSSH…PPAE and HHDY…KKDK. A compositionally biased stretch (low complexity) spans 25 to 42; it reads SRSPGPASRSSLSRNSRS. The segment covering 257–268 has biased composition (basic residues); it reads RGGHPHHLHGHA. Basic and acidic residues predominate over residues 285 to 296; the sequence is APYEKPESKKDK. 2 RRM domains span residues 314–391 and 395–469; these read RTLF…YGKV and TRMW…FAEL. The interval 507-623 is disordered; that stretch reads YAPRGGYSPY…RNDALASAST (117 aa). Over residues 526–536 the composition is skewed to basic residues; sequence GGYRGRGRGMY. Residues 566–593 are compositionally biased toward basic and acidic residues; it reads DEWRRPPGESYDRGARSSSREPGVERSR. The SPOC domain occupies 624–791; that stretch reads VPDVARKCST…HLVIVVVRGG (168 aa).

Belongs to the RRM Spen family. Component of the WMM complex, a N6-methyltransferase complex composed of a catalytic subcomplex, named MAC, and of an associated subcomplex, named MACOM. The MAC subcomplex is composed of Ime4/Mettl3 and Mettl14. The MACOM subcomplex is composed of fl(2)d, Flacc/Xio, Hakai, vir, and, in some cases of nito. Interacts with Sxl. Interacts with Hipk; leading to phosphorylation. Post-translationally, phosphorylated by Hipk at Ser-23, Ser-25 and/or Ser-27; the precise position if phosphorylation sites is unknown. Widely expressed. Shows some enrichment in the central nervous system.

The protein resides in the nucleus. In terms of biological role, RNA-binding protein that acts as an associated component of the WMM complex, a complex that mediates N6-methyladenosine (m6A) methylation of mRNAs. M6a modification plays a role in the efficiency of mRNA splicing and is required for sex determination. In the WMM complex, may act by binding target RNAs and recruiting the WMM complex. Required for sex determination and dosage compensation via Sxl alternative splicing: m6A methylation acts as a key regulator of Sxl pre-mRNA and promotes female-specific alternative splicing of Sxl, which determines female physiognomy. M6A methylation is also required for neuronal functions. Acts as a positive regulator of canonical Wg signaling during wing disk and eye development. The sequence is that of RNA-binding protein spenito from Drosophila melanogaster (Fruit fly).